A 246-amino-acid chain; its full sequence is Short chain dehydrogenase/reductase dmxR12 (246 aa).

Positions 15, 34, 125, and 164 each coordinate NADP(+). The active-site Lowers pKa of active site Tyr is the K164.

This sequence belongs to the short-chain dehydrogenases/reductases (SDR) family.

It functions in the pathway secondary metabolite biosynthesis. In terms of biological role, short chain dehydrogenase/reductase; part of the gene cluster that mediates the biosynthesis of the dimeric xanthones cryptosporioptides. The pathway begins with the synthesis of atrochrysone thioester by the polyketide synthase dmx-nrPKS. The atrochrysone carboxyl ACP thioesterase dmxR1 then breaks the thioester bond and releases the atrochrysone carboxylic acid from dmx-nrPKS. Atrochrysone carboxylic acid is decarboxylated by the decarboxylase dmxR15, and oxidized by the anthrone oxygenase dmxR16 to yield emodin. Emodin is then reduced to emodin hydroquinone by the oxidoreductase dmxR7. A-ring reduction by the short chain dehydrogenase dmxR18, dehydration by the scytalone dehydratase-like protein dmxR17 and probable spontaneous re-oxidation, results in overall deoxygenation to chrysophanol. Baeyer-Villiger oxidation by the Baeyer-Villiger monooxygenase (BVMO) dmxR6 then yields monodictylactone in equilibrium with monodictyphenone. In the case of the cryptosporioptides biosynthesis, monodictylactone is reduced at C-12 to an alcohol (by the short chain dehydrogenases dmxR12 or dmxR8) and hydroxylated at C-5 by dmxR9, yielding the electron-rich aromatic which could eliminate H(2)O to form the ortho-quinonemethide, followed by tautomerisation to paraquinone and complete the formal reduction to produce the 10-methylgroup. Conjugate addition of C-4a-OH to the resulting paraquinone by the monooxygenase dmxR10 then gives cyclohexadienone, which is then reduced at C-5 by the short chain dehydrogenase dmxR3 to give the dihydroxanthone. The 6,7-epoxide in the cryptosporioptides could be introduced by the cytochrome P450 monooxygenase dmxL3. The highly reducing PKS dmxL2 manufactures butyrate, which is further carboxylated by dmxL1 to form ethylmalonate. It is not yet clear whether the carboxylation occurs while the butyrate is attached to the ACP of dmxL2, but this unusual fungal metabolite could then be esterified to O-5 by the O-acetyltransferase dmxR13. Finally, dimerization performed by dmxR5 gives the observed dimers cryptosporioptides A, B and C as the final products of the pathway. The chain is Short chain dehydrogenase/reductase dmxR12 from Cryptosporiopsis sp. (strain 8999).